The chain runs to 622 residues: MPPTQAESVIRSIIREIGQECAAHGEIVSETLIAFMVKAVVLDPSNGFNMDRTLMKSDVQNLVKLCMTRLLDTKNPSLDTIKMQVYFDMNYTNRVEFLEEHHRVLESRLGSVTREITDNRACAKEELESLYRKIISYVLLRSGLGSPTDIKTVREVTAALQSIFPQAELGTFLTLSKKDKERQLKELTMIVTGIRLFNRDCGKGGEGIDDLPAVLHVAIPATMQHIDYQLETARSQVYRYTAILEKAANDPHMRAELQPYMLKEALYNIRQYEVFLQIILSDIITGAQEVEMMTKQLGAHLEQLKMTIKSKTAVPTSQVFPIFIALSTLWTSLQDETIVVGVLSNLFTHIQPFLGAHELYFPERAMQRHLNGATVKTDVCRMKEHMEDRVNVADFRKLEWLFPETTANFDKLLIQYRGFCAYTFAATDGLLLPGNPAIGILKYKEKYYTFNSKDAAYSFAENPEHYIDIVREKAKKNTELIQLLELHQQFETLIPYSQMRDADKHYIKPITKCESSTQTDTHILPPTIVRSYEWNEWELRRKAIKLANLHQKVTHSVQTDLSHLRRENCSQVYPPKDTSTQSMREDSTGVPRPQIYLAGLRGGKSEITDEVKVNLTRAVDET.

The tract at residues 571 to 592 (QVYPPKDTSTQSMREDSTGVPR) is disordered.

The protein belongs to the CFAP206 family.

It localises to the cytoplasm. The protein localises to the cytoskeleton. Its subcellular location is the cilium axoneme. It is found in the cilium basal body. In terms of biological role, essential for sperm motility and is involved in the regulation of the beating frequency of motile cilia on the epithelial cells of the respiratory tract. Required for the establishment of radial spokes in sperm flagella. This is Cilia- and flagella-associated protein 206 from Macaca fascicularis (Crab-eating macaque).